The primary structure comprises 329 residues: DNA-directed RNA polymerase subunit alpha (329 aa).

The interval 1 to 235 is alpha N-terminal domain (alpha-NTD); that stretch reads MQGSVTEFLK…EQLDAFVDLR (235 aa). The interval 249–329 is alpha C-terminal domain (alpha-CTD); sequence FDPILLRPVD…NWPPASIAED (81 aa).

It belongs to the RNA polymerase alpha chain family. As to quaternary structure, homodimer. The RNAP catalytic core consists of 2 alpha, 1 beta, 1 beta' and 1 omega subunit. When a sigma factor is associated with the core the holoenzyme is formed, which can initiate transcription.

It catalyses the reaction RNA(n) + a ribonucleoside 5'-triphosphate = RNA(n+1) + diphosphate. Its function is as follows. DNA-dependent RNA polymerase catalyzes the transcription of DNA into RNA using the four ribonucleoside triphosphates as substrates. The protein is DNA-directed RNA polymerase subunit alpha of Mannheimia succiniciproducens (strain KCTC 0769BP / MBEL55E).